The sequence spans 483 residues: Regulatory protein ViaA (483 aa).

This sequence belongs to the ViaA family. As to quaternary structure, homodimer. Interacts with RavA.

The protein localises to the cytoplasm. Its function is as follows. Component of the RavA-ViaA chaperone complex, which may act on the membrane to optimize the function of some of the respiratory chains. ViaA stimulates the ATPase activity of RavA. The protein is Regulatory protein ViaA of Enterobacter sp. (strain 638).